The following is a 222-amino-acid chain: Recombination protein RecR (222 aa).

The segment at 57–72 (CPVCFNITDAERCDVC) adopts a C4-type zinc-finger fold. The region spanning 80–173 (SVICVVEEPG…VVSRIAYGLP (94 aa)) is the Toprim domain. The interval 189–222 (ALSGRRRVSEPASPPPPRRNDEEQDGAPARPPSH) is disordered.

This sequence belongs to the RecR family.

In terms of biological role, may play a role in DNA repair. It seems to be involved in an RecBC-independent recombinational process of DNA repair. It may act with RecF and RecO. This is Recombination protein RecR from Deinococcus geothermalis (strain DSM 11300 / CIP 105573 / AG-3a).